Reading from the N-terminus, the 121-residue chain is Large ribosomal subunit protein bL19 (121 aa).

The protein belongs to the bacterial ribosomal protein bL19 family.

Functionally, this protein is located at the 30S-50S ribosomal subunit interface and may play a role in the structure and function of the aminoacyl-tRNA binding site. In Legionella pneumophila (strain Paris), this protein is Large ribosomal subunit protein bL19.